We begin with the raw amino-acid sequence, 170 residues long: Myosin regulatory light chain 2 (170 aa).

The segment covering 1–13 (MSKAAKKKSSKKR) has biased composition (basic residues). A disordered region spans residues 1–22 (MSKAAKKKSSKKRSGSEAAQFD). EF-hand domains lie at 24 to 59 (KTIQEFKEAFGIMDQNKDGIIDKSDLKDLYASMGQI) and 93 to 128 (DPEATIVGAFAMFDKKDCGKIKEDDLIKILQNKRGE). The Ca(2+) site is built by Asp-37, Asn-39, Asp-41, and Asp-48.

As to quaternary structure, myosin is a hexamer of 2 heavy chains and 4 light chains (two regulatory light chains and two essential light chains).

The protein is Myosin regulatory light chain 2 (mlc-2) of Caenorhabditis elegans.